Reading from the N-terminus, the 364-residue chain is Glycine oxidase (364 aa).

Residues 12–13 (VI), 32–33 (ER), 40–41 (AS), 45–47 (GGI), and valine 173 each bind FAD. Arginine 302 provides a ligand contact to substrate. 327–333 (HYRNGLV) provides a ligand contact to FAD.

This sequence belongs to the DAO family. ThiO subfamily. Monomer. It depends on FAD as a cofactor.

The enzyme catalyses glycine + O2 + H2O = glyoxylate + H2O2 + NH4(+). The catalysed reaction is sarcosine + O2 + H2O = methylamine + glyoxylate + H2O2. The protein operates within cofactor biosynthesis; thiamine diphosphate biosynthesis. Functionally, catalyzes the oxidation of glycine, leading to glyoxyl imine and hydrogen peroxide as primary products; glyoxyl imine is used for the biosynthesis of the thiazole ring of thiamine. Otherwise, glyoxyl imine is spontaneously hydrolyzed in water to produce glyoxylate and ammonia. Can also use sarcosine (N-methylglycine) as substrate. This Pseudomonas aeruginosa (strain ATCC 15692 / DSM 22644 / CIP 104116 / JCM 14847 / LMG 12228 / 1C / PRS 101 / PAO1) protein is Glycine oxidase.